A 447-amino-acid chain; its full sequence is MYQKLLEEYKSKLVTADEAAKQVKSGDWVEYGFGINCARDFDEALAKRKDELEDVKIRCDIGAYQHFTAEVDPDNKHFTWNSWHVAGHDRKFINKNLFYIPMKFHENPMMTRKDCVPTNVAVIQCTAMDKHGYFNFGGSSVNCCAMMETARVTILEVNEKMPRCLGGNQECLHISQVDYIIQSKNEPIATIGSAEPSPVEIAMAQHIIERLYDGNCIQLGIGGTPNAVGSMVAASDLKDLGVHTEMYVDAYLLMAKAGKITGARKSIDKYKQVYSFAMGSQELYDYIDDNPGLASYSVDYTNNPWVVAQIDDFVSINACIEVDLYGQVCAESVGTRHISGTGGQLDFVEGAYKSKNGQSFICLPSTIEIKGEVTSRIKPILTPGAIVTDPRTATHMMVTEFGIATLKGRSTWERAEELIKIAHPDFQDELVKEAQKMNIWRKSNKIG.

220–224 (GIGGT) serves as a coordination point for CoA. Glu245 serves as the catalytic 5-glutamyl coenzyme A thioester intermediate. Positions 320 and 343 each coordinate CoA.

Belongs to the acetyl-CoA hydrolase/transferase family.

It localises to the cytoplasm. It carries out the reaction butanoate + acetyl-CoA = butanoyl-CoA + acetate. It functions in the pathway lipid metabolism; butanoate metabolism. Its function is as follows. Coenzyme A-transferase that converts butyrate to butyryl-CoA. Involved in the syntrophic growth of S.wolfei on butyrate in cooperation with methanogens or an appropriate hydrogen-scavenging bacterium, as part of the butyrate oxidation pathway. In Syntrophomonas wolfei subsp. wolfei (strain DSM 2245B / Goettingen), this protein is Probable butyrate:acetyl-CoA coenzyme A-transferase.